A 127-amino-acid chain; its full sequence is Large-conductance mechanosensitive channel (127 aa).

A run of 3 helical transmembrane segments spans residues 19–39 (VGVIVGAAFTAIVNSLVTNII), 42–62 (LLGIFVGSIDFSNLVFTVGSA), and 67–87 (GAFINSVINFLIIAFVVFLLI).

It belongs to the MscL family. Homopentamer.

The protein resides in the cell membrane. Its function is as follows. Channel that opens in response to stretch forces in the membrane lipid bilayer. May participate in the regulation of osmotic pressure changes within the cell. The polypeptide is Large-conductance mechanosensitive channel (Levilactobacillus brevis (strain ATCC 367 / BCRC 12310 / CIP 105137 / JCM 1170 / LMG 11437 / NCIMB 947 / NCTC 947) (Lactobacillus brevis)).